A 161-amino-acid polypeptide reads, in one-letter code: 3-isopropylmalate dehydratase small subunit (161 aa).

It belongs to the LeuD family. LeuD type 2 subfamily. Heterodimer of LeuC and LeuD.

The catalysed reaction is (2R,3S)-3-isopropylmalate = (2S)-2-isopropylmalate. Its pathway is amino-acid biosynthesis; L-leucine biosynthesis; L-leucine from 3-methyl-2-oxobutanoate: step 2/4. Catalyzes the isomerization between 2-isopropylmalate and 3-isopropylmalate, via the formation of 2-isopropylmaleate. The protein is 3-isopropylmalate dehydratase small subunit of Pyrobaculum calidifontis (strain DSM 21063 / JCM 11548 / VA1).